We begin with the raw amino-acid sequence, 249 residues long: Uroplakin-3b-like protein 1 (249 aa).

The first 26 residues, 1-26 (MGPHGKQSVLRMPLLLLLTCVQSGTG), serve as a signal peptide directing secretion. Topologically, residues 27 to 194 (LESINYAPQL…PGSQGKGTVV (168 aa)) are extracellular. Asparagine 63, asparagine 82, and asparagine 133 each carry an N-linked (GlcNAc...) asparagine glycan. Residues 195-215 (IIAFLSILLAILLVVFLVLVI) traverse the membrane as a helical segment. At 216 to 249 (SACLSTSGSSPEEQVRMRHYHTHHMGSLRAERSS) the chain is on the cytoplasmic side.

The protein belongs to the uroplakin-3 family.

The protein localises to the membrane. The chain is Uroplakin-3b-like protein 1 from Mus musculus (Mouse).